The following is a 119-amino-acid chain: Ribonuclease P protein component (119 aa).

It belongs to the RnpA family. In terms of assembly, consists of a catalytic RNA component (M1 or rnpB) and a protein subunit.

The enzyme catalyses Endonucleolytic cleavage of RNA, removing 5'-extranucleotides from tRNA precursor.. Its function is as follows. RNaseP catalyzes the removal of the 5'-leader sequence from pre-tRNA to produce the mature 5'-terminus. It can also cleave other RNA substrates such as 4.5S RNA. The protein component plays an auxiliary but essential role in vivo by binding to the 5'-leader sequence and broadening the substrate specificity of the ribozyme. The polypeptide is Ribonuclease P protein component (Bacillus pumilus (strain SAFR-032)).